A 476-amino-acid chain; its full sequence is Proline--tRNA ligase 2 (476 aa).

This sequence belongs to the class-II aminoacyl-tRNA synthetase family. ProS type 3 subfamily. Homodimer.

The protein resides in the cytoplasm. The catalysed reaction is tRNA(Pro) + L-proline + ATP = L-prolyl-tRNA(Pro) + AMP + diphosphate. Its function is as follows. Catalyzes the attachment of proline to tRNA(Pro) in a two-step reaction: proline is first activated by ATP to form Pro-AMP and then transferred to the acceptor end of tRNA(Pro). This is Proline--tRNA ligase 2 from Bacillus cereus (strain ATCC 10987 / NRS 248).